We begin with the raw amino-acid sequence, 412 residues long: Polyferredoxin protein MvhB (412 aa).

12 4Fe-4S ferredoxin-type domains span residues 2 to 29 (IVINKEDCIRCGACQGVCPTGAISVKPE), 30 to 57 (DVIYCDMCGGEPKCVEACPNDALRHEDI), 66 to 95 (KKITYSPEKCDKCGECVKVCPPGILKLVND), 96 to 127 (GKASRVPLEGFCVLCQQCVNVCPIEVIGIEGV), 138 to 166 (DKPIYIVDCVGCGLCVPECPVNAITLPKY), 168 to 197 (ESIEIDEEKCIKCGICAQTCPWNSVYISGK), 207 to 236 (ENFTLDKEECIGCNTCVEICPGGFIEPKSD), 237 to 265 (LTVSLPEICPACGLCEKLCPTDAIELEVK), 275 to 304 (EGIVYNDENCKFCGRCALNCPNEAIRVVSP), 311 to 344 (GLKKVDEKESYTICTTCGACTTVCPTGALKLVEV), 356 to 385 (NRIQYNPSLCDKCGNCVDVCPYGILKLTDD), and 386 to 412 (EKLPVKGFCILCEKCIDACRFNALLIK). The [4Fe-4S] cluster site is built by Cys-9, Cys-12, Cys-15, and Cys-19. Positions 75, 78, 81, 85, 107, 110, 113, 117, 146, 149, 152, 156, 177, 180, 183, 187, 216, 219, 222, 226, 245, 248, 251, 255, 284, 287, 290, 294, 324, 327, 330, 334, 365, 368, 371, and 375 each coordinate [4Fe-4S] cluster.

It depends on [4Fe-4S] cluster as a cofactor.

The polypeptide is Polyferredoxin protein MvhB (mvhB) (Methanothermus fervidus).